A 498-amino-acid polypeptide reads, in one-letter code: Pre-glycoprotein polyprotein GP complex (498 aa).

G2 carries the N-myristoyl glycine; by host lipid modification. The Extracellular segment spans residues 2–17 (GQIVTMFEALPHIIDE). A helical transmembrane segment spans residues 18–33 (VINIVIIVLIVITGIK). The Cytoplasmic segment spans residues 34–58 (AVYNFATCGIFALISFLLLAGRSCG). Residue C57 coordinates Zn(2+). Topologically, residues 59–438 (MYGLKGPDIY…QGSTPLALMD (380 aa)) are extracellular. N-linked (GlcNAc...) asparagine; by host glycans are attached at residues N85, N95, N114, N124, and N171. Cystine bridges form between C92-C239, C123-C160, C184-C220, C285-C298, C307-C316, and C370-C391. N-linked (GlcNAc...) asparagine; by host glycosylation is present at N232. N-linked (GlcNAc...) asparagine; by host glycosylation is found at N371, N396, and N401. Residues 439–459 (LLMFSTSAYLVSIFLHLVKIP) traverse the membrane as a helical segment. Residues 460-498 (THRHIKGGSCPKPHRLTNKGICSCGAFKVPGVKTVWKRR) lie on the Cytoplasmic side of the membrane. Residues H461, H463, C469, H473, C481, and C483 each contribute to the Zn(2+) site.

The protein belongs to the arenaviridae GPC protein family. As to quaternary structure, interacts with glycoprotein G2. Part of the GP complex (GP-C) together with glycoprotein G1 and glycoprotein G2. The GP-complex interacts with protein Z, which interacts with ribonucleocapsid; these interactions may induce virion budding. In terms of assembly, homotrimer; disulfide-linked. In pre-fusion state, G1 homotrimers bind G2 homotrimers via ionic interactions. Part of the GP complex (GP-C) together with glycoprotein G2 and the stable signal peptide. Interacts with the primary host receptor DAG1 on the cell surface. The GP-complex interacts with protein Z, which interacts with ribonucleocapsid; these interactions may induce virion budding. Homotrimer. Interacts with the stable signal peptide. In pre-fusion state, G2 homotrimers bind G1 homotrimers via ionic interactions. Part of the GP complex (GP-C) together with glycoprotein G1 and the stable signal peptide. Acidification in the endosome triggers rearrangements, which ultimately leads to a 6 helix bundle formed by the two heptad repeat domains (HR1 and HR2) in post-fusion state. The GP-complex interacts with protein Z, which interacts with ribonucleocapsid; these interactions may induce virion budding. Post-translationally, specific enzymatic cleavages in vivo yield mature proteins. GP-C polyprotein is cleaved in the endoplasmic reticulum by the host protease MBTPS1. Only cleaved glycoprotein is incorporated into virions. In terms of processing, the SSP remains stably associated with the GP complex following cleavage by signal peptidase and plays crucial roles in the trafficking of GP through the secretory pathway. Myristoylation is necessary for GP2-mediated fusion activity. Inhibition of host myristoylation by the compound DDD85646 leads to the abrogation of GP2-mediated fusion upon exposure to low pH and inhibition of viral multiplication.

It localises to the virion membrane. The protein localises to the host endoplasmic reticulum membrane. Its subcellular location is the host Golgi apparatus membrane. It is found in the host cell membrane. Its function is as follows. Functions as a cleaved signal peptide that is retained as the third component of the GP complex (GP-C). Helps to stabilize the spike complex in its native conformation. The SSP is required for efficient glycoprotein expression, post-translational maturation cleavage of G1 and G2, glycoprotein transport to the cell surface plasma membrane, formation of infectious virus particles, and acid pH-dependent glycoprotein-mediated cell fusion. Functionally, forms the virion spikes together with glycoprotein G2. The glycoprotein spike trimers are connected to the underlying matrix. Interacts with the host receptor. Mediates virus attachment to the host primary receptor alpha-dystroglycan DAG1 (alpha-DG) at the cell surface. Down-modulates host DAG1. In terms of biological role, forms the virion spikes together with glycoprotein G1. The glycoprotein spike trimers are connected to the underlying matrix. Class I viral fusion protein that directs fusion of viral and host endosomal membranes, leading to delivery of the nucleocapsid into the cytoplasm. Membrane fusion is mediated by irreversible conformational changes induced by acidification. The sequence is that of Pre-glycoprotein polyprotein GP complex from Homo sapiens (Human).